We begin with the raw amino-acid sequence, 193 residues long: Acyl carrier protein phosphodiesterase (193 aa).

Belongs to the AcpH family.

It carries out the reaction holo-[ACP] + H2O = apo-[ACP] + (R)-4'-phosphopantetheine + H(+). Its function is as follows. Converts holo-ACP to apo-ACP by hydrolytic cleavage of the phosphopantetheine prosthetic group from ACP. The chain is Acyl carrier protein phosphodiesterase from Salmonella agona (strain SL483).